The primary structure comprises 573 residues: Poly(ribitol-phosphate) beta-N-acetylglucosaminyltransferase TarS (573 aa).

UDP-N-acetyl-alpha-D-glucosamine is bound by residues P9, D41, N68, R76, 92–94 (DSD), R127, and E178. D94 contributes to the Mn(2+) binding site. Residue D179 is the Proton acceptor of the active site. Residues R207 and 211–213 (HMS) contribute to the UDP-N-acetyl-alpha-D-glucosamine site.

It belongs to the glycosyltransferase 2 family. Homotrimer. The cofactor is Mn(2+).

The catalysed reaction is 4-O-[(D-ribitylphospho)(n)-di{(2R)-glycerylphospho}]-N-acetyl-beta-D-mannosaminyl-(1-&gt;4)-N-acetyl-alpha-D-glucosaminyl di-trans,octa-cis-undecaprenyl diphosphate + n UDP-N-acetyl-alpha-D-glucosamine = 4-O-([2-N-acetyl-beta-D-glucosaminyl-1-D-ribitylphospho](n)-di{[2R]-1-glycerylphospho})-N-acetyl-beta-D-mannosaminyl-(1-&gt;4)-N-acetyl-alpha-D-glucosaminyl di-trans,octa-cis-undecaprenyl diphosphate + n UDP + n H(+). It participates in cell wall biogenesis; poly(ribitol phosphate) teichoic acid biosynthesis. Its function is as follows. Attaches beta-O-GlcNAc (beta-O-N-acetyl-D-glucosamine) residues to the C4 position of poly(RboP)-wall teichoic acids (WTAs). Mediates beta-lactam resistance in methicillin resistant Staphylococcus aureus (MRSA) strains. The polypeptide is Poly(ribitol-phosphate) beta-N-acetylglucosaminyltransferase TarS (Staphylococcus aureus (strain Mu50 / ATCC 700699)).